The primary structure comprises 580 residues: Negative elongation factor B (580 aa).

K519 carries the N6-acetyllysine modification. A disordered region spans residues 552 to 580; it reads DHRKPSPTQAAETPALDLPLPSVPAPATL. At S557 the chain carries Phosphoserine.

Belongs to the NELF-B family. In terms of assembly, the NELF complex is composed of NELFA, NELFB, NELFCD and NELFE; the N-terminus of NELFB binds to the NELFA:NELFCD subcomplex. Binds RNA which may help to stabilize the NELF complex on nucleic acid Interacts with the first BRCT repeat of BRCA1. Interacts with KIAA1191. Isoform 1 and isoform 2 interact with NELFA, NELFCD and NELFE. Isoform 1 is expressed in the kidney, liver, adipose and lung. Isoform 2 is widely expressed.

The protein localises to the nucleus. In terms of biological role, essential component of the NELF complex, a complex that negatively regulates the elongation of transcription by RNA polymerase II (Pol II). The NELF complex, which acts via an association with the DSIF complex and causes transcriptional pausing, is counteracted by the P-TEFb kinase complex. May be able to induce chromatin unfolding. Essential for early embryogenesis; plays an important role in maintaining the undifferentiated state of embryonic stem cells (ESCs) by preventing unscheduled expression of developmental genes. Plays a key role in establishing the responsiveness of stem cells to developmental cues; facilitates plasticity and cell fate commitment in ESCs by establishing the appropriate expression level of signaling molecules. Supports the transcription of genes involved in energy metabolism in cardiomyocytes; facilitates the association of transcription initiation factors with the promoters of the metabolism-related genes. The sequence is that of Negative elongation factor B (Nelfb) from Mus musculus (Mouse).